A 126-amino-acid chain; its full sequence is MKEIIFTEKAPKPIGPYSQGVKVGDILYVSGQIPVDPKTNEVVGKNIEEQTIRVIENIKAVLEAAGYMLDDVVMSFVYLKDIKDFQRFNEVYSKYFSNKPPARVTVEVSRLPRDVLIEITVIAQKS.

It belongs to the RutC family.

This Saccharolobus solfataricus (strain ATCC 35092 / DSM 1617 / JCM 11322 / P2) (Sulfolobus solfataricus) protein is RutC family protein SSO3206.